A 305-amino-acid chain; its full sequence is Acetylglutamate kinase (305 aa).

Substrate is bound by residues 67 to 68 (GG), Arg89, and Asn190.

Belongs to the acetylglutamate kinase family. ArgB subfamily.

Its subcellular location is the cytoplasm. It catalyses the reaction N-acetyl-L-glutamate + ATP = N-acetyl-L-glutamyl 5-phosphate + ADP. It participates in amino-acid biosynthesis; L-arginine biosynthesis; N(2)-acetyl-L-ornithine from L-glutamate: step 2/4. Catalyzes the ATP-dependent phosphorylation of N-acetyl-L-glutamate. The protein is Acetylglutamate kinase of Bifidobacterium longum (strain NCC 2705).